The sequence spans 179 residues: Large ribosomal subunit protein uL5 (179 aa).

Belongs to the universal ribosomal protein uL5 family. In terms of assembly, part of the 50S ribosomal subunit; part of the 5S rRNA/L5/L18/L25 subcomplex. Contacts the 5S rRNA and the P site tRNA. Forms a bridge to the 30S subunit in the 70S ribosome.

Functionally, this is one of the proteins that bind and probably mediate the attachment of the 5S RNA into the large ribosomal subunit, where it forms part of the central protuberance. In the 70S ribosome it contacts protein S13 of the 30S subunit (bridge B1b), connecting the 2 subunits; this bridge is implicated in subunit movement. Contacts the P site tRNA; the 5S rRNA and some of its associated proteins might help stabilize positioning of ribosome-bound tRNAs. This is Large ribosomal subunit protein uL5 from Pectobacterium carotovorum subsp. carotovorum (strain PC1).